Reading from the N-terminus, the 249-residue chain is Anamorsin homolog (249 aa).

Residues 1–130 (MEQFKDLQKS…ETGSAARLSF (130 aa)) are N-terminal SAM-like domain. A linker region spans residues 131-161 (AKKAAGVNVWKISGDDEELIDEEDLLDEADK). Positions 172, 181, 184, and 186 each coordinate [2Fe-2S] cluster. The interval 172–186 (CSTTGKRKACKNCSC) is fe-S binding site A. Residues C210, C213, C221, and C224 each coordinate [4Fe-4S] cluster. 2 consecutive short sequence motifs (cx2C motif) follow at residues 210 to 213 (CGNC) and 221 to 224 (CSTC). Residues 210-224 (CGNCYLGDAFRCSTC) are fe-S binding site B.

This sequence belongs to the anamorsin family. In terms of assembly, monomer. Requires [2Fe-2S] cluster as cofactor. [4Fe-4S] cluster is required as a cofactor.

Its subcellular location is the cytoplasm. It localises to the mitochondrion intermembrane space. Its function is as follows. Component of the cytosolic iron-sulfur (Fe-S) protein assembly (CIA) machinery. Required for the maturation of extramitochondrial Fe-S proteins. Part of an electron transfer chain functioning in an early step of cytosolic Fe-S biogenesis, facilitating the de novo assembly of a [4Fe-4S] cluster on the cytosolic Fe-S scaffold complex. Electrons are transferred from NADPH via a FAD- and FMN-containing diflavin oxidoreductase. Together with the diflavin oxidoreductase, also required for the assembly of the diferric tyrosyl radical cofactor of ribonucleotide reductase (RNR), probably by providing electrons for reduction during radical cofactor maturation in the catalytic small subunit. This Drosophila grimshawi (Hawaiian fruit fly) protein is Anamorsin homolog.